We begin with the raw amino-acid sequence, 103 residues long: Large ribosomal subunit protein bL21 (103 aa).

Belongs to the bacterial ribosomal protein bL21 family. In terms of assembly, part of the 50S ribosomal subunit. Contacts protein L20.

In terms of biological role, this protein binds to 23S rRNA in the presence of protein L20. The sequence is that of Large ribosomal subunit protein bL21 from Thioalkalivibrio sulfidiphilus (strain HL-EbGR7).